A 421-amino-acid polypeptide reads, in one-letter code: Probable dual-specificity RNA methyltransferase RlmN (421 aa).

Residues 1–23 form a disordered region; that stretch reads MTATTAESGRPDQPPTAEAGRPV. Glu127 serves as the catalytic Proton acceptor. Positions 133 to 372 constitute a Radical SAM core domain; that stretch reads YPDRATVCVS…VTTVRDTRGR (240 aa). A disulfide bridge connects residues Cys140 and Cys378. [4Fe-4S] cluster contacts are provided by Cys147, Cys151, and Cys154. S-adenosyl-L-methionine-binding positions include 202–203, Ser236, 259–261, and Asn335; these read GE and SLH. Cys378 acts as the S-methylcysteine intermediate in catalysis. The disordered stretch occupies residues 383-421; it reads AEPAGKPERTDRPEQVGSDRLVEFGAVGSTTPDGDRVLR. Basic and acidic residues predominate over residues 387 to 396; the sequence is GKPERTDRPE.

It belongs to the radical SAM superfamily. RlmN family. Requires [4Fe-4S] cluster as cofactor.

The protein localises to the cytoplasm. It catalyses the reaction adenosine(2503) in 23S rRNA + 2 reduced [2Fe-2S]-[ferredoxin] + 2 S-adenosyl-L-methionine = 2-methyladenosine(2503) in 23S rRNA + 5'-deoxyadenosine + L-methionine + 2 oxidized [2Fe-2S]-[ferredoxin] + S-adenosyl-L-homocysteine. The catalysed reaction is adenosine(37) in tRNA + 2 reduced [2Fe-2S]-[ferredoxin] + 2 S-adenosyl-L-methionine = 2-methyladenosine(37) in tRNA + 5'-deoxyadenosine + L-methionine + 2 oxidized [2Fe-2S]-[ferredoxin] + S-adenosyl-L-homocysteine. Its function is as follows. Specifically methylates position 2 of adenine 2503 in 23S rRNA and position 2 of adenine 37 in tRNAs. In Frankia casuarinae (strain DSM 45818 / CECT 9043 / HFP020203 / CcI3), this protein is Probable dual-specificity RNA methyltransferase RlmN.